A 164-amino-acid polypeptide reads, in one-letter code: UPF0114 protein YqhA (164 aa).

3 helical membrane-spanning segments follow: residues 15 to 35 (LLAP…LKFF), 53 to 73 (LILV…LVMV), and 136 to 156 (LMWY…MGYL).

The protein belongs to the UPF0114 family.

The protein localises to the cell membrane. This Escherichia coli O6:H1 (strain CFT073 / ATCC 700928 / UPEC) protein is UPF0114 protein YqhA.